A 968-amino-acid polypeptide reads, in one-letter code: Pumilio homolog 1 (968 aa).

Disordered regions lie at residues 1–25 and 138–171; these read MIPE…DYEK and NNVL…TGAS. Ser194 carries the post-translational modification Phosphoserine. Disordered stretches follow at residues 204-240, 260-303, and 360-382; these read GHGH…SQGI, GTPD…VTSG, and KSDQ…PHGS. Polar residues-rich tracts occupy residues 211 to 220 and 227 to 238; these read QQPSRPASRN and DSNNNLSPSASQ. Thr261 carries the phosphothreonine modification. Residues 291–303 are compositionally biased toward polar residues; sequence TSNQSPFNGVTSG. Positions 610-950 constitute a PUM-HD domain; that stretch reads FGSSMLEEFK…HVVARIEKLV (341 aa). 8 Pumilio repeats span residues 630–665, 666–701, 702–737, 738–773, 774–810, 811–846, 847–882, and 883–924; these read EIAG…MVYE, EIMP…ELAE, KLFD…KMVK, ELDG…FIIS, TFFG…KVME, EILS…VIIK, ELAG…LLVN, and EMLG…LILT.

It is found in the cytoplasm. Functionally, sequence-specific RNA-binding protein that regulates translation and mRNA stability by binding the 3'-UTR of target mRNAs. Binds the APUM-binding elements (APBEs) in the 3'-UTR mRNA sequence of CLV1, PNH, WUS and FAS2. The chain is Pumilio homolog 1 (APUM1) from Arabidopsis thaliana (Mouse-ear cress).